Consider the following 313-residue polypeptide: Dioxygenase swnH2 (313 aa).

His155, Asp157, and His232 together coordinate Fe cation.

This sequence belongs to the PhyH family. In terms of assembly, homodimer. Requires Fe cation as cofactor.

It participates in mycotoxin biosynthesis. In terms of biological role, aminotransferase; part of the gene cluster that mediates the biosynthesis of swainsonine (SW), a cytotoxic fungal alkaloid and a potential cancer therapy drug. Swainsonine production occurs via a multibranched pathway and is dispensable for fungal colonization of plants and infection of insect hosts. The first step of swainsonine biosynthesis is the production of the precursor pipecolic acid (PA) via conversion of L-lysine (Lys) to 1-piperideine-6-carboxylate (P6C) by the aminotransferase swnA, the latter being further reduced to PA by the reductase swnR. The PKS-NRPS hybrid synthetase swnK uptakes and condensates PA and malonyl-CoA with and without skipping of the ketoreductase (KR) domain in order to produce 3 intermediates, 1-oxoindolizidine, (1S)-1-hydroxyindolizin, and (1R)-1-hydroxyindolizine; with the transisomer (1S)-1-hydroxyindolizin being predominant. The terminal thioester reductase (TE) domain of swnK is involved in reduction of the thioester bond to release the intermediate aldehydes. The oxidoreductase swnN could contribute to the reduction of 1-oxoindolizidine to (1S)-1-hydroxyindolizin and (1R)-1-hydroxyindolizine, contributing to the major route of SW production. The dioxygenase swnH2 would be responsible for the oxidization of (1R)-1-hydroxyindolizine into (1R,2S)-1,2-dihydroxyindolizine and of (1S)-1-hydroxyindolizin to yield both (1R,2S)-1,2-dihydroxyindolizine and (1S,2S)-1,2-dihydroxyindolizine. The dioxygenase swnH1 then performs the conversion of the 1,2-dihydroxyindolizine epimers to SW. This is Dioxygenase swnH2 from Arthroderma benhamiae (strain ATCC MYA-4681 / CBS 112371) (Trichophyton mentagrophytes).